The sequence spans 126 residues: Iron-sulfur cluster insertion protein ErpA (126 aa).

Positions 1–21 are disordered; it reads MNQPANQFNPSSSQPVDPTVL. Iron-sulfur cluster-binding residues include C54, C118, and C120.

Belongs to the HesB/IscA family. In terms of assembly, homodimer. Iron-sulfur cluster is required as a cofactor.

In terms of biological role, required for insertion of 4Fe-4S clusters for at least IspG. The sequence is that of Iron-sulfur cluster insertion protein ErpA from Psychrobacter arcticus (strain DSM 17307 / VKM B-2377 / 273-4).